Here is a 454-residue protein sequence, read N- to C-terminus: MNIKIPRIVIGGTGSGVGKTTIALALTQILRKKGLKVATFKCGPDYLDPTYHSRASQKICHNLDGWLMGKESVLNTFYQACHNVDIAIIEGMMGLFDGHSPNSEIGSTAEIAKWLASPVLVVLDTRGMARTVSAILKGLKIFDPDLNLAGAFANFTGSPSHIQLLKDASTEVPILGGLCKHSEQTFPERHLGLYSASEENVSEEKFNFWGEEGEKSLEVNSILEIANSAPEISIPVSNINTTLKRCKIGIAMDSAFHFYYEENLMRLRQAGAELVFFSPLSDSRLTDVDGLYFGGGYPEVFAPTLSKNKSLLNYIRDLSYKNIPIYAECGGLMYLSKGIKLVEGEFFPMLGLISATSIMEKKLKALGYVEVTTKKETIFGEVGLRFRGHQFRYSDLELDESNPIELVYNLRKRKSDQVSEEGYSKNSILASYIHAHWASNPNLAEGFVQSCLRK.

A GATase cobBQ-type domain is found at 247–442 (KIGIAMDSAF…IHAHWASNPN (196 aa)). Cys329 serves as the catalytic Nucleophile.

It belongs to the CobB/CbiA family. Mg(2+) is required as a cofactor.

The catalysed reaction is cob(II)yrinate + 2 L-glutamine + 2 ATP + 2 H2O = cob(II)yrinate a,c diamide + 2 L-glutamate + 2 ADP + 2 phosphate + 2 H(+). It functions in the pathway cofactor biosynthesis; adenosylcobalamin biosynthesis; cob(II)yrinate a,c-diamide from sirohydrochlorin (anaerobic route): step 10/10. Catalyzes the ATP-dependent amidation of the two carboxylate groups at positions a and c of cobyrinate, using either L-glutamine or ammonia as the nitrogen source. This is Cobyrinate a,c-diamide synthase from Leptospira interrogans serogroup Icterohaemorrhagiae serovar copenhageni (strain Fiocruz L1-130).